We begin with the raw amino-acid sequence, 549 residues long: Glutamyl-tRNA(Gln) amidotransferase subunit B, mitochondrial (549 aa).

The N-terminal 23 residues, 1–23 (MLRISRDTKIVARVTHVTKSRTY), are a transit peptide targeting the mitochondrion.

This sequence belongs to the GatB/GatE family. GatB subfamily. As to quaternary structure, subunit of the heterotrimeric GatFAB amidotransferase (AdT) complex, composed of A, B and F subunits.

The protein resides in the mitochondrion. The catalysed reaction is L-glutamyl-tRNA(Gln) + L-glutamine + ATP + H2O = L-glutaminyl-tRNA(Gln) + L-glutamate + ADP + phosphate + H(+). Allows the formation of correctly charged Gln-tRNA(Gln) through the transamidation of misacylated Glu-tRNA(Gln) in the mitochondria. The reaction takes place in the presence of glutamine and ATP through an activated gamma-phospho-Glu-tRNA(Gln). The polypeptide is Glutamyl-tRNA(Gln) amidotransferase subunit B, mitochondrial (Yarrowia lipolytica (strain CLIB 122 / E 150) (Yeast)).